A 448-amino-acid chain; its full sequence is Probable cytosolic Fe-S cluster assembly factor Bm6838 (448 aa).

[4Fe-4S] cluster contacts are provided by C27, C66, C69, C72, C170, C226, C370, and C374.

It belongs to the NARF family.

Functionally, component of the cytosolic iron-sulfur (Fe/S) protein assembly machinery. Required for maturation of extramitochondrial Fe/S proteins. In Brugia malayi (Filarial nematode worm), this protein is Probable cytosolic Fe-S cluster assembly factor Bm6838.